Reading from the N-terminus, the 342-residue chain is Nuclear distribution protein nudE homolog 1 (342 aa).

A coiled-coil region spans residues 45 to 189; the sequence is REYEAELETQ…ELAVQQKQEK (145 aa). The interval 89–157 is interaction with PAFAH1B1; that stretch reads EWYRQVSALE…ERNAFLESEL (69 aa). 2 disordered regions span residues 182–203 and 320–342; these read AVQQ…TERT and GTRP…KMLL. Residues 322-342 show a composition bias toward polar residues; the sequence is RPSSTPGPMSHPSQSVVKMLL.

The protein belongs to the nudE family. As to quaternary structure, self-associates. Interacts with PAFAH1B1. Phosphorylated in mitosis.

It localises to the cytoplasm. It is found in the cytoskeleton. The protein localises to the microtubule organizing center. The protein resides in the centrosome. Its subcellular location is the spindle. It localises to the chromosome. It is found in the centromere. The protein localises to the kinetochore. The protein resides in the cleavage furrow. Its subcellular location is the cytoplasmic vesicle membrane. Required for centrosome duplication and formation and function of the mitotic spindle. The sequence is that of Nuclear distribution protein nudE homolog 1 (NDE1) from Gallus gallus (Chicken).